Here is a 247-residue protein sequence, read N- to C-terminus: Orotidine 5'-phosphate decarboxylase (247 aa).

Substrate-binding positions include D16, K38, D66–T75, T130, R191, Q200, G220, and R221. K68 acts as the Proton donor in catalysis.

It belongs to the OMP decarboxylase family. Type 1 subfamily. Homodimer.

It catalyses the reaction orotidine 5'-phosphate + H(+) = UMP + CO2. Its pathway is pyrimidine metabolism; UMP biosynthesis via de novo pathway; UMP from orotate: step 2/2. Its function is as follows. Catalyzes the decarboxylation of orotidine 5'-monophosphate (OMP) to uridine 5'-monophosphate (UMP). The chain is Orotidine 5'-phosphate decarboxylase from Rhodospirillum rubrum (strain ATCC 11170 / ATH 1.1.1 / DSM 467 / LMG 4362 / NCIMB 8255 / S1).